We begin with the raw amino-acid sequence, 353 residues long: Guanine nucleotide-binding protein subunit alpha (353 aa).

The N-myristoyl glycine moiety is linked to residue Gly-2. The S-palmitoyl cysteine moiety is linked to residue Cys-3. One can recognise a G-alpha domain in the interval Asn-33–Leu-353. The G1 motif stretch occupies residues Lys-36 to Thr-49. Residues Glu-44, Ser-45, Gly-46, Lys-47, Ser-48, Thr-49, Asp-150, Leu-175, Thr-181, Gly-203, Asn-269, Lys-270, Asp-272, and Ala-325 each coordinate GTP. Position 48 (Ser-48) interacts with Mg(2+). The tract at residues Asp-173–Thr-181 is G2 motif. Thr-181 contacts Mg(2+). The interval Tyr-196–Arg-205 is G3 motif. The tract at residues Ile-265–Asp-272 is G4 motif. Positions Thr-323 to Thr-328 are G5 motif.

It belongs to the G-alpha family. G(q) subfamily. As to quaternary structure, g proteins are composed of 3 units; alpha, beta and gamma. The alpha chain contains the guanine nucleotide binding site. Mg(2+) serves as cofactor.

Guanine nucleotide-binding proteins (G proteins) are involved as modulators or transducers in various transmembrane signaling systems. The protein is Guanine nucleotide-binding protein subunit alpha (CGP1) of Coprinellus congregatus (Inky cap fungus).